The sequence spans 93 residues: MNQEAASNLGLDLKLNISPSLDSSLLTESSSSSLCSEEAEGGGGEAKSMVVVGCPNCIMYIITSLENDPRCPRCNSHVLLDFLTGNHSKKSTS.

The span at 23-36 (SSLLTESSSSSLCS) shows a compositional bias: low complexity. The segment at 23–46 (SSLLTESSSSSLCSEEAEGGGGEA) is disordered.

With respect to regulation, triggered by EIN3. Its function is as follows. Involved in ethylene-dependent salt stress responses by reducing reactive oxygen species (ROS) accumulation. The polypeptide is Protein salt-induced and EIN3/EIL1-dependent 1 (Arabidopsis thaliana (Mouse-ear cress)).